The primary structure comprises 513 residues: Calcium-binding mitochondrial carrier protein SCaMC-2 (513 aa).

Residues 1-233 (MARPRSLVSP…EKQTGMWWRH (233 aa)) are Mitochondrial intermembrane-facing. EF-hand domains are found at residues 55–90 (EHET…LGVH), 91–124 (RTEL…RDHE), 122–157 (DHEK…LGVN), and 158–193 (ISEQ…HPAE). Asp-68, Asn-70, Asp-72, Asp-79, Asp-104, Asp-106, Asp-108, Gln-110, and Glu-115 together coordinate Ca(2+). 3 Solcar repeats span residues 228–314 (GMWW…MKRI), 322–407 (LGIH…LKNA), and 419–507 (PGVF…LKLT). Residues 234-251 (LVAGGGAGAVSRTCTAPL) form a helical membrane-spanning segment. At 252–288 (DRLKVLMQVHASRSNNMSMLGGFTQMIREGGIRSLWR) the chain is on the mitochondrial matrix side. A helical membrane pass occupies residues 289-308 (GNGINVIKIAPESAIKFMAY). At 309 to 331 (EQMKRIIGSDQETLGIHERLVAG) the chain is on the mitochondrial intermembrane side. Residues 332–345 (SLAGVIAQSSIYPM) form a helical membrane-spanning segment. At 346-381 (EVLKTRMALRKTGQYQGMLDCGKKILLKEGVSAFYK) the chain is on the mitochondrial matrix side. Residues 382–401 (GYVPNMLGIIPYAGIDLAVY) traverse the membrane as a helical segment. Over 402 to 424 (ETLKNAWLQRYATSSADPGVFVL) the chain is Mitochondrial intermembrane. The helical transmembrane segment at 425–442 (LACGTISSTCGQLASYPL) threads the bilayer. The Mitochondrial matrix portion of the chain corresponds to 443 to 481 (ALVRTRMQAEASVEGAPQMTMSKLFKHIVKTEGAFGLYR). A helical transmembrane segment spans residues 482-501 (GLAPNFMKVIPAVSISYVVY). Residues 502–513 (ENLKLTLGVQSR) lie on the Mitochondrial intermembrane side of the membrane.

Belongs to the mitochondrial carrier (TC 2.A.29) family.

Its subcellular location is the mitochondrion inner membrane. In terms of biological role, calcium-dependent mitochondrial solute carrier. This chain is Calcium-binding mitochondrial carrier protein SCaMC-2 (slc25a25), found in Xenopus tropicalis (Western clawed frog).